We begin with the raw amino-acid sequence, 217 residues long: Nucleolar protein 12 (217 aa).

Residues 34–98 (GFHKRKVERK…LVTAKTESVQ (65 aa)) adopt a coiled-coil conformation. Residues 122 to 217 (LGLPLPEQGD…MTGKARHNGE (96 aa)) form a disordered region. Residues 130–141 (GDQDGSQEEEMS) are compositionally biased toward acidic residues. 2 stretches are compositionally biased toward basic residues: residues 172-184 (AHSR…KHPR) and 201-217 (KTQR…HNGE).

Belongs to the RRP17 family. In terms of assembly, interacts with KIAA1191. As to expression, expressed in brain, lung, spleen, kidney and heart.

It is found in the nucleus. Its subcellular location is the nucleolus. The protein localises to the cytoplasm. In terms of biological role, multifunctional RNA binding protein that plays a role in RNA metabolism and DNA maintenance. Participates in the resolution of DNA stress and the maintenance of genome integrity by localizing to sites of DNA insults. Also plays a role in proper nucleolar organization by limiting nucleolar size and regulating nucleolar number. Mechanistically, regulates the nucleolar levels of fibrillarin and nucleolin, two key players in pre-rRNA processing and ribosome assembly. In Mus musculus (Mouse), this protein is Nucleolar protein 12 (Nol12).